A 452-amino-acid polypeptide reads, in one-letter code: Nuclear distribution protein PAC1 (452 aa).

The LisH domain occupies 12–44; it reads QKDELHKAILAYFSASGLSNTGAALREELGVGD. The stretch at 64 to 91 forms a coiled coil; it reads TGVLRLQKKIMELESRLSSLQSELDSAT. 8 WD repeats span residues 117 to 158, 160 to 200, 204 to 245, 248 to 287, 290 to 350, 352 to 391, 396 to 435, and 437 to 452; these read SHRN…RTVK, HTKA…KNIR, GHDH…CVKT, GHSDWIRDVEPSHDGRWLLSAGGDQTTRLWDASTAEHKAT, GHEH…LKTL, GHDNWIRALAFHPAGKYLLSVSDDKTIRCWDLTQDGRCVK, AHSHFATCLRWAPAPAKEQTNGEAKTNGIPKAGEKVINVR, and VIATGSADMNVRVFAS.

This sequence belongs to the WD repeat LIS1/nudF family. As to quaternary structure, self-associates. Interacts with NDL1 and dynein.

The protein resides in the cytoplasm. It is found in the cytoskeleton. The protein localises to the spindle pole. Positively regulates the activity of the minus-end directed microtubule motor protein dynein. May enhance dynein-mediated microtubule sliding by targeting dynein to the microtubule plus end. Required for nuclear migration during vegetative growth as well as development. Required for retrograde early endosome (EE) transport from the hyphal tip. Required for localization of dynein to the mitotic spindle poles. Recruits additional proteins to the dynein complex at SPBs. In Tuber melanosporum (strain Mel28) (Perigord black truffle), this protein is Nuclear distribution protein PAC1.